The primary structure comprises 314 residues: Malate dehydrogenase (314 aa).

NAD(+) contacts are provided by residues 12–17 (GAGFTG) and aspartate 36. Substrate-binding residues include arginine 87 and arginine 93. Residues asparagine 100 and 123-125 (LTN) contribute to the NAD(+) site. Position 125 (asparagine 125) interacts with substrate. Serine 149 carries the post-translational modification Phosphoserine. Arginine 156 contributes to the substrate binding site. Histidine 180 functions as the Proton acceptor in the catalytic mechanism.

The protein belongs to the LDH/MDH superfamily. MDH type 3 family.

The catalysed reaction is (S)-malate + NAD(+) = oxaloacetate + NADH + H(+). Catalyzes the reversible oxidation of malate to oxaloacetate. This chain is Malate dehydrogenase, found in Halalkalibacterium halodurans (strain ATCC BAA-125 / DSM 18197 / FERM 7344 / JCM 9153 / C-125) (Bacillus halodurans).